Consider the following 56-residue polypeptide: Small ribosomal subunit protein uS14 (56 aa).

The Zn(2+) site is built by C21, C24, C39, and C42.

The protein belongs to the universal ribosomal protein uS14 family. It depends on Zn(2+) as a cofactor.

The chain is Small ribosomal subunit protein uS14 (RPS29) from Griffithsia japonica (Red alga).